The chain runs to 294 residues: Golgi phosphoprotein 3 homolog sauron (294 aa).

The segment at 1 to 52 (MNRSDGLVRRSVKPRENGGAEGGLNANTPDDNQDALDNLKDQEDNIDDGDSK) is disordered. Basic and acidic residues predominate over residues 37–52 (DNLKDQEDNIDDGDSK). The a 1,2-diacyl-sn-glycero-3-phospho-(1D-myo-inositol 4-phosphate) site is built by Trp77, Arg86, Lys167, and Arg170. Residues 186–197 (EKQNFLLFDMTT) form a beta-hairpin required for oligomerization region.

The protein belongs to the GOLPH3/VPS74 family. In terms of assembly, homooligomer. Interacts with botv, Ext2 and ttv. Interacts with Vti1. Interacts with Vps35, Rab5, Chc, Rab11, zip, Pav and Septin1.

It localises to the golgi apparatus membrane. Its subcellular location is the cytoplasmic vesicle. The protein resides in the cleavage furrow. In terms of biological role, phosphatidylinositol-4-phosphate-binding protein that links Golgi membranes to the cytoskeleton and may participate in the tensile force required for vesicle budding from the Golgi. Thereby, may play a role in Golgi membrane trafficking and could indirectly give its flattened shape to the Golgi apparatus. May also bind to the coatomer to regulate Golgi membrane trafficking. May play a role in anterograde transport from the Golgi to the plasma membrane and regulate secretion. Also involved in the control of the localization of Golgi enzymes through interaction with their cytoplasmic part. Functions in cytokinesis by regulating contractile ring formation and vesicle trafficking during cleavage furrow ingression. May also have a role in the intital steps of central spindle formation. Can also bind phosphatidylinositol-3-phosphate and phosphatidylinositol-5-phosphate in vitro. This chain is Golgi phosphoprotein 3 homolog sauron, found in Drosophila melanogaster (Fruit fly).